The primary structure comprises 693 residues: F-box protein MAX2 (693 aa).

An F-box domain is found at 3-50 (STTLSDLPDVILSTISSLVSDSRARNSLSLVSHKFLALERSTRSHLTI). 14 LRR repeats span residues 9–34 (LPDV…SLVS), 49–74 (TIRG…DLSF), 75–100 (LSPW…RLKF), 110–135 (VYTR…KLLR), 141–167 (SQIP…DLSN), 168–196 (FYHW…DLLT), 200–225 (TEGY…RVAC), 232–257 (FEFV…HMVD), 274–299 (DSAV…VLDV), 302–327 (DVKH…KLGQ), 332–356 (CSAT…SIKN), 357–382 (SGDL…EIQG), 383–409 (CENV…RISC), and 410–436 (CKNL…HIDC). Residues 445–465 (EVEGRVETSEADHEEEDDGYE) are disordered. 4 LRR repeats span residues 480 to 505 (CSTS…SLWI), 508 to 532 (GEFL…RIKI), 541 to 565 (RPAE…QLDC), and 608 to 637 (DRDV…FIHG).

As to quaternary structure, part of a SCF (SKP1-cullin-F-box) protein ligase complex. Interacts with SKP1A/ASK1. Interacts with CUL1. Interacts with SMXL6, SMXL7 and SMXL8. Interacts with D14. Forms a complex with D14 and SKP1A/ASK1 in presence of strigolactone. In terms of tissue distribution, expressed in the vasculature of growing leaves and roots, rosette axillary bud, flowers, siliques, funiculi and stems.

Its subcellular location is the nucleus. It functions in the pathway protein modification; protein ubiquitination. Functionally, component of SCF(ASK-cullin-F-box) E3 ubiquitin ligase complexes, which may mediate the ubiquitination and subsequent proteasomal degradation of target proteins. Promotes the senescence. Is necessary for responses to strigolactones and karrikins. Contributes to the selective repression of axillary shoots and moderates the branching by regulating negatively the auxin transport in primary stems, in an AXR1-independent manner. Required for the progression of leaf senescence mediated by methyl jasmonate. Required at each node to suppress axillary bud growth. This chain is F-box protein MAX2, found in Arabidopsis thaliana (Mouse-ear cress).